We begin with the raw amino-acid sequence, 299 residues long: Serpentine receptor class gamma-30 (299 aa).

Transmembrane regions (helical) follow at residues Gly-18–Leu-38, Ile-59–Pro-79, Ile-98–Val-118, Ile-137–Phe-157, Ile-189–Ile-209, Leu-223–Tyr-243, and Ala-260–Leu-280.

The protein belongs to the nematode receptor-like protein srg family.

The protein localises to the membrane. This is Serpentine receptor class gamma-30 (srg-30) from Caenorhabditis elegans.